The chain runs to 257 residues: Diaminopimelate epimerase (257 aa).

Positions 13, 46, and 66 each coordinate substrate. Catalysis depends on C75, which acts as the Proton donor. Residues 76-77 (GN), N145, N175, and 193-194 (ER) each bind substrate. C202 (proton acceptor) is an active-site residue. Residue 203 to 204 (GS) coordinates substrate.

This sequence belongs to the diaminopimelate epimerase family. Homodimer.

It localises to the cytoplasm. It catalyses the reaction (2S,6S)-2,6-diaminopimelate = meso-2,6-diaminopimelate. It functions in the pathway amino-acid biosynthesis; L-lysine biosynthesis via DAP pathway; DL-2,6-diaminopimelate from LL-2,6-diaminopimelate: step 1/1. Functionally, catalyzes the stereoinversion of LL-2,6-diaminopimelate (L,L-DAP) to meso-diaminopimelate (meso-DAP), a precursor of L-lysine and an essential component of the bacterial peptidoglycan. The sequence is that of Diaminopimelate epimerase from Gluconobacter oxydans (strain 621H) (Gluconobacter suboxydans).